The following is a 121-amino-acid chain: Large ribosomal subunit protein bL12 (121 aa).

It belongs to the bacterial ribosomal protein bL12 family. As to quaternary structure, homodimer. Part of the ribosomal stalk of the 50S ribosomal subunit. Forms a multimeric L10(L12)X complex, where L10 forms an elongated spine to which 2 to 4 L12 dimers bind in a sequential fashion. Binds GTP-bound translation factors.

Forms part of the ribosomal stalk which helps the ribosome interact with GTP-bound translation factors. Is thus essential for accurate translation. The sequence is that of Large ribosomal subunit protein bL12 from Shewanella piezotolerans (strain WP3 / JCM 13877).